A 185-amino-acid polypeptide reads, in one-letter code: MTTPNKTPPGADPKQLERTGTVREIGSQAVWSLSSCKPGFGVDQLRDDNLETYWQSDGSQPHLVNIQFRRKTTVKTLCIYADYKSDESYTPSKISVRVGNNFHNLQEIRQLELVEPSGWIHVPLTDNHKKPTRTFMIQIAVLANHQNGRDTHMRQIKIYTPVEESSIGKFPRCTTIDFMMYRSIR.

T2 is subject to N-acetylthreonine. Residues 2 to 185 enclose the DOC domain; the sequence is TTPNKTPPGA…IDFMMYRSIR (184 aa). N6-acetyllysine is present on K169.

This sequence belongs to the APC10 family. As to quaternary structure, the mammalian APC/C is composed at least of 14 distinct subunits ANAPC1, ANAPC2, CDC27/APC3, ANAPC4, ANAPC5, CDC16/APC6, ANAPC7, CDC23/APC8, ANAPC10, ANAPC11, CDC26/APC12, ANAPC13, ANAPC15 and ANAPC16 that assemble into a complex of at least 19 chains with a combined molecular mass of around 1.2 MDa; APC/C interacts with FZR1 and FBXO5. The C-terminus of APC10 binds to CDC27/APC3. Interacts with PIWIL1; interaction only takes place when PIWIL1 binds piRNA. Interacts with FBXO43; the interaction is direct.

The protein operates within protein modification; protein ubiquitination. Component of the anaphase promoting complex/cyclosome (APC/C), a cell cycle-regulated E3 ubiquitin ligase that controls progression through mitosis and the G1 phase of the cell cycle. The APC/C complex acts by mediating ubiquitination and subsequent degradation of target proteins: it mainly mediates the formation of 'Lys-11'-linked polyubiquitin chains and, to a lower extent, the formation of 'Lys-48'- and 'Lys-63'-linked polyubiquitin chains. The APC/C complex catalyzes assembly of branched 'Lys-11'-/'Lys-48'-linked branched ubiquitin chains on target proteins. The chain is Anaphase-promoting complex subunit 10 (ANAPC10) from Homo sapiens (Human).